We begin with the raw amino-acid sequence, 350 residues long: uncharacterized protein (350 aa).

The region spanning 171-334 (PTVVIAGYPN…LKERLKKIAI (164 aa)) is the OBG-type G domain. GTP is bound by residues 177–184 (GYPNVGKS), 219–223 (DTPGL), and 286–289 (NKID).

Belongs to the TRAFAC class OBG-HflX-like GTPase superfamily. OBG GTPase family. NOG subfamily.

This is an uncharacterized protein from Methanocaldococcus jannaschii (strain ATCC 43067 / DSM 2661 / JAL-1 / JCM 10045 / NBRC 100440) (Methanococcus jannaschii).